We begin with the raw amino-acid sequence, 465 residues long: Argininosuccinate lyase (465 aa).

Belongs to the lyase 1 family. Argininosuccinate lyase subfamily.

It is found in the cytoplasm. The catalysed reaction is 2-(N(omega)-L-arginino)succinate = fumarate + L-arginine. It participates in amino-acid biosynthesis; L-arginine biosynthesis; L-arginine from L-ornithine and carbamoyl phosphate: step 3/3. This is Argininosuccinate lyase from Clostridium botulinum (strain Alaska E43 / Type E3).